The following is a 377-amino-acid chain: Succinyl-diaminopimelate desuccinylase (377 aa).

H67 provides a ligand contact to Zn(2+). The active site involves D69. D100 lines the Zn(2+) pocket. Catalysis depends on E134, which acts as the Proton acceptor. Zn(2+)-binding residues include E135, E163, and H349.

This sequence belongs to the peptidase M20A family. DapE subfamily. Homodimer. The cofactor is Zn(2+). Co(2+) serves as cofactor.

The enzyme catalyses N-succinyl-(2S,6S)-2,6-diaminopimelate + H2O = (2S,6S)-2,6-diaminopimelate + succinate. It functions in the pathway amino-acid biosynthesis; L-lysine biosynthesis via DAP pathway; LL-2,6-diaminopimelate from (S)-tetrahydrodipicolinate (succinylase route): step 3/3. Its function is as follows. Catalyzes the hydrolysis of N-succinyl-L,L-diaminopimelic acid (SDAP), forming succinate and LL-2,6-diaminopimelate (DAP), an intermediate involved in the bacterial biosynthesis of lysine and meso-diaminopimelic acid, an essential component of bacterial cell walls. The polypeptide is Succinyl-diaminopimelate desuccinylase (Mannheimia succiniciproducens (strain KCTC 0769BP / MBEL55E)).